Consider the following 445-residue polypeptide: Probable D-serine dehydratase (445 aa).

Lys-111 is modified (N6-(pyridoxal phosphate)lysine).

It belongs to the serine/threonine dehydratase family. DsdA subfamily. The cofactor is pyridoxal 5'-phosphate.

It catalyses the reaction D-serine = pyruvate + NH4(+). The chain is Probable D-serine dehydratase from Burkholderia pseudomallei (strain K96243).